The chain runs to 102 residues: Small ribosomal subunit protein uS10 (102 aa).

The protein belongs to the universal ribosomal protein uS10 family. Part of the 30S ribosomal subunit.

In terms of biological role, involved in the binding of tRNA to the ribosomes. This chain is Small ribosomal subunit protein uS10, found in Acidiphilium cryptum (strain JF-5).